The chain runs to 798 residues: MPGAASIVAVLAALLPTALGQANQSYVDYNIEANPDLFSECLETGGTSFPDCESGPLSKTLVCDTSAKPHDRAAALVSLLTFEELVNNTANTGHGAPRIGLPAYQVWNEALHGVAHADFSDAGGFSWSTSFPQPISTMAALNRTLIHQIATIISTQGRAFMNAGRYGLDVYSPNINTFRHPVWGRGQETPGEDAYCLASTYAYEYITGIQGGVDANPLKLIATAKHYAGYDIENWDNHSRLGNDMQITQQDLAEYYTPQFLVASRDAKVHSVMCSYNAVNGVPSCSNSFFLQTLLRDTFDFVEDGYVSGDCGAVYNVFNPHGYATNESSAAADSIRAGTDIDCGVSYPRHFQESFHDQEVSRQDLERGVTRLYASLIRAGYFDGKTSPYRNITWSDVVSTNAQNLSYEAAAQSIVLLKNDGILPLTSTSSSTKTIALIGPWANATTQMLGNYYGPAPYLISPLQAFQDSEYKITYTIGTNTTTDPDSTSQSTALTTAKEADLIIFAGGIDNTLETEAQDRSNITWPSNQLSLITKLADLGKPLIVLQMGGGQVDSSALKNNKNVNALIWGGYPGQSGGQALADIITGKRAPAARLVTTQYPAEYAEVFPAIDMNLRPNGSNPGQTYMWYTGTPVYEFGHGLFYTNFTASASASSGTKNRTSFNIDEVLGRPHLGYKLVEQMPLLNFTVDVKNTGDRVSDYTAMAFVNTTAGPAPHPNKWLVGFDRLSAVEPGSAKTMVIPVTVDSLARTDEEGNRVLYPGRYEVALNNEREVVLGFTLTGEKAVLFKWPKEEQLIAPQ.

The first 20 residues, 1-20 (MPGAASIVAVLAALLPTALG), serve as a signal peptide directing secretion. N23, N87, N142, and N237 each carry an N-linked (GlcNAc...) asparagine glycan. The active site involves D310. 11 N-linked (GlcNAc...) asparagine glycosylation sites follow: N326, N391, N404, N443, N480, N522, N618, N645, N658, N685, and N707.

This sequence belongs to the glycosyl hydrolase 3 family.

The protein localises to the secreted. It catalyses the reaction Hydrolysis of (1-&gt;4)-beta-D-xylans, to remove successive D-xylose residues from the non-reducing termini.. It functions in the pathway glycan degradation; xylan degradation. Xylan 1,4-beta-xylosidase involved in the hydrolysis of xylan, a major structural heterogeneous polysaccharide found in plant biomass representing the second most abundant polysaccharide in the biosphere, after cellulose. This Aspergillus oryzae (strain ATCC 42149 / RIB 40) (Yellow koji mold) protein is Exo-1,4-beta-xylosidase xlnD (xlnD).